The primary structure comprises 65 residues: MPKIKTNRGAAKRFRKSASGRVKRGNAFTSHILTHKTRKNKRNLRGTSMVSDVDQKNISRLIPYK.

Residues 1–51 (MPKIKTNRGAAKRFRKSASGRVKRGNAFTSHILTHKTRKNKRNLRGTSMVS) form a disordered region. 2 stretches are compositionally biased toward basic residues: residues 10 to 24 (AAKR…RVKR) and 33 to 44 (LTHKTRKNKRNL).

It belongs to the bacterial ribosomal protein bL35 family.

The chain is Large ribosomal subunit protein bL35 from Pelobacter propionicus (strain DSM 2379 / NBRC 103807 / OttBd1).